Here is a 452-residue protein sequence, read N- to C-terminus: Keratin, type I cytoskeletal 42 (452 aa).

The interval 4–93 (TTSIRQFSTS…GVSDALLGGS (90 aa)) is head. Coiled-coil stretches lie at residues 93–132 (SEKETMQNLNDRLATYLDRVRALEEANTDLEVKIREWYKK) and 188–407 (NLRM…HLAT). A coil 1A region spans residues 94-129 (EKETMQNLNDRLATYLDRVRALEEANTDLEVKIREW). An IF rod domain is found at 94–405 (EKETMQNLND…RLLEGEDAHL (312 aa)). The linker 1 stretch occupies residues 130 to 147 (YKKQGPGPARDYSPYFKT). The coil 1B stretch occupies residues 148–239 (IEDLRNKILA…KNHEEEMNAL (92 aa)). Positions 240–262 (RGQVGGDVNVEMDAAPGVDLSRI) are linker 12. Positions 263 to 401 (LNEMRDQYEK…ATYRRLLEGE (139 aa)) are coil 2. Residues 402 to 452 (DAHLATQYSSSLASQASREGTVTSRQVRTIVEEVQDGKVVSSREQVHRSTH) form a tail region.

It belongs to the intermediate filament family. As to quaternary structure, heterodimer of a type I and a type II keratin. Colocalizes with KRT8/KRT18 filament network.

It is found in the cytoplasm. The chain is Keratin, type I cytoskeletal 42 from Rattus norvegicus (Rat).